Reading from the N-terminus, the 142-residue chain is Taurine up-regulated 1 protein (142 aa).

A signal peptide spans 1 to 40 (MARPPPLPGLVGRRSGRAVDRAIGWRLFLLLWHPALGAQA). The Extracellular portion of the chain corresponds to 41–123 (RPPRRAPGGR…ARTQLEGQEG (83 aa)). A helical membrane pass occupies residues 124-140 (AGGWLVVGFLLCLFLLM). Over 141–142 (PP) the chain is Cytoplasmic.

As to expression, widely expressed in the adult with highest levels in placenta and testis. Also expressed in a number of embryonic tissues at multiple embryonic stages.

Its subcellular location is the nucleus membrane. The protein resides in the mitochondrion membrane. The protein localises to the cytoplasm. This Mus musculus (Mouse) protein is Taurine up-regulated 1 protein.